Consider the following 702-residue polypeptide: Putative endo-beta-N-acetylglucosaminidase (702 aa).

Residues 1-23 (MKKVRFIFLALLFFLASPEGAMA) form the signal peptide. Cell wall-binding repeat units follow at residues 42-63 (ANEW…DANY), 65-84 (ENEW…GGYM), 86-105 (KSEW…DGKM), 124-145 (IEDW…DGQH), 147-166 (EKEW…GGYL), 185-206 (QQGW…NGNY), 208-227 (DKEW…GGYM), 229-248 (ANEW…DGKI), 250-271 (EKEW…GGYM), 273-292 (ANEW…DGKM), 294-315 (EKEW…GGYM), 317-336 (ANEW…DGKI), 338-359 (EKEW…GGYM), 361-380 (ANEW…DGKM), and 382-403 (EKEW…GGYM).

It belongs to the glycosyl hydrolase 73 family.

The protein resides in the secreted. It catalyses the reaction an N(4)-(oligosaccharide-(1-&gt;3)-[oligosaccharide-(1-&gt;6)]-beta-D-Man-(1-&gt;4)-beta-D-GlcNAc-(1-&gt;4)-alpha-D-GlcNAc)-L-asparaginyl-[protein] + H2O = an oligosaccharide-(1-&gt;3)-[oligosaccharide-(1-&gt;6)]-beta-D-Man-(1-&gt;4)-D-GlcNAc + N(4)-(N-acetyl-beta-D-glucosaminyl)-L-asparaginyl-[protein]. Functionally, plays an important role in cell wall degradation and cell separation. The chain is Putative endo-beta-N-acetylglucosaminidase (lytB) from Streptococcus pneumoniae (strain ATCC BAA-255 / R6).